The sequence spans 66 residues: Sec-independent protein translocase protein TatA (66 aa).

Residues 1-21 (MSIGIWQIAIVVILVVLLFGR) form a helical membrane-spanning segment. Residues 43–66 (ATDITDEPEPKNVSENNQDSKDKE) are disordered. The segment covering 50 to 66 (PEPKNVSENNQDSKDKE) has biased composition (basic and acidic residues).

It belongs to the TatA/E family. As to quaternary structure, the Tat system comprises two distinct complexes: a TatABC complex, containing multiple copies of TatA, TatB and TatC subunits, and a separate TatA complex, containing only TatA subunits. Substrates initially bind to the TatABC complex, which probably triggers association of the separate TatA complex to form the active translocon.

The protein resides in the cell inner membrane. Part of the twin-arginine translocation (Tat) system that transports large folded proteins containing a characteristic twin-arginine motif in their signal peptide across membranes. TatA could form the protein-conducting channel of the Tat system. This is Sec-independent protein translocase protein TatA from Pelagibacter ubique (strain HTCC1062).